Consider the following 138-residue polypeptide: Large ribosomal subunit protein uL16 (138 aa).

A compositionally biased stretch (basic residues) spans Met1–Gln13. The disordered stretch occupies residues Met1–Thr22.

Belongs to the universal ribosomal protein uL16 family. Part of the 50S ribosomal subunit.

Functionally, binds 23S rRNA and is also seen to make contacts with the A and possibly P site tRNAs. The chain is Large ribosomal subunit protein uL16 from Paraburkholderia phymatum (strain DSM 17167 / CIP 108236 / LMG 21445 / STM815) (Burkholderia phymatum).